We begin with the raw amino-acid sequence, 277 residues long: Phosphoribosylaminoimidazole-succinocarboxamide synthase (277 aa).

The protein belongs to the SAICAR synthetase family.

The enzyme catalyses 5-amino-1-(5-phospho-D-ribosyl)imidazole-4-carboxylate + L-aspartate + ATP = (2S)-2-[5-amino-1-(5-phospho-beta-D-ribosyl)imidazole-4-carboxamido]succinate + ADP + phosphate + 2 H(+). Its pathway is purine metabolism; IMP biosynthesis via de novo pathway; 5-amino-1-(5-phospho-D-ribosyl)imidazole-4-carboxamide from 5-amino-1-(5-phospho-D-ribosyl)imidazole-4-carboxylate: step 1/2. This Salinispora tropica (strain ATCC BAA-916 / DSM 44818 / JCM 13857 / NBRC 105044 / CNB-440) protein is Phosphoribosylaminoimidazole-succinocarboxamide synthase.